The primary structure comprises 260 residues: Transforming acid coiled-coil-containing protein 1 (260 aa).

A disordered region spans residues Met-1–Ser-43. Residues Ala-108–Val-249 are a coiled coil.

Belongs to the TACC family. As to quaternary structure, interacts with zyg-9 to form a heterodimer. Interacts with zyg-8 to form a heterodimer. Interacts with efa-6 (via N-terminus). As to expression, expressed in touch neurons.

The protein localises to the cytoplasm. It localises to the cytoskeleton. Its subcellular location is the spindle pole. It is found in the microtubule organizing center. The protein resides in the centrosome. The protein localises to the chromosome. It localises to the centromere. Its subcellular location is the kinetochore. It is found in the cell projection. The protein resides in the axon. The protein localises to the perikaryon. In terms of biological role, involved in microtubule formation, polymerization and assembly, regulating microtubule nucleation and length. Plays a role in pronuclear migration and mitotic and meiotic spindle elongation during early embryogenesis. In complex with zyg-9, functions during the early stages of embryonic development to regulate microtubule assembly throughout the cell cycle. Specifically, the complex is required for the formation and growth of astral microtubules and spindle microtubules during mitotic spindle assembly. At anaphase, the complex is required for mitotic spindle positioning in one-cell stage embryos. The complex acts in a partially redundant manner with the tac-1/zyg-8 complex to regulate microtubule assembly and processes during interphase, mitosis and meiosis in embryos. Plays a role in injury-induced axonal regrowth, regeneration and microtubule stability in PLM neurons and this may be downstream of efa-6. This Caenorhabditis elegans protein is Transforming acid coiled-coil-containing protein 1.